Here is a 183-residue protein sequence, read N- to C-terminus: MEPEEGTPLWRLQKLPAELGPQLLHKIIDGICGRAYPVYQDYHTVWESEEWMHVLEDIAKFFKAIVGKNLPDEEIFQQLNQLNSLHQETIMKCVKSRKDEIKQALSREIVAISSAQLQDFDWQVKLALSSDKIAALRMPLLSLHLDVKENGEVKPYSIEMSREELQNLIQSLEAANKVVLQLK.

In terms of domain architecture, COMM spans 116-183 (QLQDFDWQVK…AANKVVLQLK (68 aa)).

The protein belongs to the COMM domain-containing protein 8 family. In terms of assembly, component of the commander complex consisting of the CCC subcomplex and the retriever subcomplex. Component of the CCC (COMMD/CCDC22/CCDC93) subcomplex consisting of COMMD1, COMMD2, COMMD3, COMMD4, COMMD5, COMMD6, COMMD7, COMMD8, COMMD9, COMMD10, CCDC22 and CCDC93; within the complex forms a heterodimer with COMMD4. Interacts with RELA, RELB, NFKB1/p105. Interacts with CCDC22, CCDC93, SCNN1B, CUL1, CUL2, CUL3, CUL4A, CUL4B, CUL5. As to expression, widely expressed with highest expression in thyroid.

The protein localises to the cytoplasm. It is found in the nucleus. In terms of biological role, scaffold protein in the commander complex that is essential for endosomal recycling of transmembrane cargos; the commander complex is composed of the CCC subcomplex and the retriever subcomplex. May modulate activity of cullin-RING E3 ubiquitin ligase (CRL) complexes. May down-regulate activation of NF-kappa-B. This Homo sapiens (Human) protein is COMM domain-containing protein 8 (COMMD8).